The sequence spans 360 residues: Photosystem II protein D1 2 (360 aa).

The next 3 membrane-spanning stretches (helical) occupy residues 29-46 (YIGWFGVIMIPTLLAATI), 118-133 (HFLIGIFCYMGREWEL), and 142-156 (WIPVAFSAPVAAATA). Residue His-118 coordinates chlorophyll a. Residue Tyr-126 coordinates pheophytin a. [CaMn4O5] cluster contacts are provided by Asp-170 and Glu-189. The helical transmembrane segment at 197–218 (FHMLGVAGVFGGALFAAMHGSL) threads the bilayer. His-198 serves as a coordination point for chlorophyll a. A quinone-binding positions include His-215 and 264–265 (SF). His-215 lines the Fe cation pocket. Residue His-272 participates in Fe cation binding. The chain crosses the membrane as a helical span at residues 274-288 (FLAAWPVVGIWFAAL). Residues His-332, Glu-333, Asp-342, and Ala-344 each contribute to the [CaMn4O5] cluster site. The propeptide occupies 345–360 (SGELAPVAMIAPSIEA).

This sequence belongs to the reaction center PufL/M/PsbA/D family. In terms of assembly, PSII is composed of 1 copy each of membrane proteins PsbA, PsbB, PsbC, PsbD, PsbE, PsbF, PsbH, PsbI, PsbJ, PsbK, PsbL, PsbM, PsbT, PsbX, PsbY, PsbZ, Psb30/Ycf12, peripheral proteins PsbO, CyanoQ (PsbQ), PsbU, PsbV and a large number of cofactors. It forms dimeric complexes. The cofactor is The D1/D2 heterodimer binds P680, chlorophylls that are the primary electron donor of PSII, and subsequent electron acceptors. It shares a non-heme iron and each subunit binds pheophytin, quinone, additional chlorophylls, carotenoids and lipids. D1 provides most of the ligands for the Mn4-Ca-O5 cluster of the oxygen-evolving complex (OEC). There is also a Cl(-1) ion associated with D1 and D2, which is required for oxygen evolution. The PSII complex binds additional chlorophylls, carotenoids and specific lipids.. In terms of processing, tyr-161 forms a radical intermediate that is referred to as redox-active TyrZ, YZ or Y-Z. Post-translationally, C-terminally processed by CtpA; processing is essential to allow assembly of the oxygen-evolving complex and thus photosynthetic growth.

The protein resides in the cellular thylakoid membrane. It carries out the reaction 2 a plastoquinone + 4 hnu + 2 H2O = 2 a plastoquinol + O2. Photosystem II (PSII) is a light-driven water:plastoquinone oxidoreductase that uses light energy to abstract electrons from H(2)O, generating O(2) and a proton gradient subsequently used for ATP formation. It consists of a core antenna complex that captures photons, and an electron transfer chain that converts photonic excitation into a charge separation. The D1/D2 (PsbA/PsbD) reaction center heterodimer binds P680, the primary electron donor of PSII as well as several subsequent electron acceptors. The sequence is that of Photosystem II protein D1 2 from Synechococcus elongatus.